A 339-amino-acid polypeptide reads, in one-letter code: NADH-quinone oxidoreductase subunit H (339 aa).

8 helical membrane-spanning segments follow: residues leucine 19–alanine 39, phenylalanine 87–phenylalanine 107, leucine 120–alanine 140, serine 153–methionine 173, phenylalanine 191–valine 211, isoleucine 253–phenylalanine 273, proline 275–phenylalanine 295, and leucine 310–methionine 330.

Belongs to the complex I subunit 1 family. NDH-1 is composed of 14 different subunits. Subunits NuoA, H, J, K, L, M, N constitute the membrane sector of the complex.

It is found in the cell inner membrane. It carries out the reaction a quinone + NADH + 5 H(+)(in) = a quinol + NAD(+) + 4 H(+)(out). Functionally, NDH-1 shuttles electrons from NADH, via FMN and iron-sulfur (Fe-S) centers, to quinones in the respiratory chain. The immediate electron acceptor for the enzyme in this species is believed to be ubiquinone. Couples the redox reaction to proton translocation (for every two electrons transferred, four hydrogen ions are translocated across the cytoplasmic membrane), and thus conserves the redox energy in a proton gradient. This subunit may bind ubiquinone. This chain is NADH-quinone oxidoreductase subunit H, found in Methylobacillus flagellatus (strain ATCC 51484 / DSM 6875 / VKM B-1610 / KT).